The following is a 653-amino-acid chain: ATP-dependent zinc metalloprotease FtsH 1 (653 aa).

At methionine 1 to serine 7 the chain is on the cytoplasmic side. Residues alanine 8 to proline 28 traverse the membrane as a helical segment. Topologically, residues glycine 29–glycine 105 are extracellular. A helical membrane pass occupies residues tryptophan 106–leucine 126. At methionine 127–alanine 653 the chain is on the cytoplasmic side. Residue glycine 198–threonine 205 coordinates ATP. Zn(2+) is bound at residue histidine 420. Glutamate 421 is an active-site residue. Positions 424 and 496 each coordinate Zn(2+). The interval glutamate 603–alanine 653 is disordered. Over residues serine 611–proline 620 the composition is skewed to pro residues.

This sequence in the central section; belongs to the AAA ATPase family. In the C-terminal section; belongs to the peptidase M41 family. As to quaternary structure, homohexamer. It depends on Zn(2+) as a cofactor.

The protein localises to the cell membrane. Functionally, acts as a processive, ATP-dependent zinc metallopeptidase for both cytoplasmic and membrane proteins. Plays a role in the quality control of integral membrane proteins. This is ATP-dependent zinc metalloprotease FtsH 1 from Conexibacter woesei (strain DSM 14684 / CCUG 47730 / CIP 108061 / JCM 11494 / NBRC 100937 / ID131577).